We begin with the raw amino-acid sequence, 182 residues long: Ribosome-recycling factor (182 aa).

This sequence belongs to the RRF family.

It localises to the cytoplasm. Functionally, responsible for the release of ribosomes from messenger RNA at the termination of protein biosynthesis. May increase the efficiency of translation by recycling ribosomes from one round of translation to another. The polypeptide is Ribosome-recycling factor (Hydrogenobaculum sp. (strain Y04AAS1)).